A 205-amino-acid polypeptide reads, in one-letter code: Small ribosomal subunit protein uS4 (205 aa).

A disordered region spans residues 19 to 45; that stretch reads IWGRPKSPVNRREYGPGQHGQRRKGKL. In terms of domain architecture, S4 RNA-binding spans 94–157; it reads RRLDAVVYRA…KQLAFVLEAS (64 aa).

Part of the 30S ribosomal subunit. Contacts protein S5. The interaction surface between S4 and S5 is involved in control of translational fidelity. Post-translationally, may be methylated on an undetermined residue.

One of the primary rRNA binding proteins, it binds directly to 16S rRNA where it nucleates assembly of the body of the 30S subunit. Its function is as follows. With S5 and S12 plays an important role in translational accuracy. This chain is Small ribosomal subunit protein uS4, found in Rhodopseudomonas palustris (strain ATCC BAA-98 / CGA009).